Here is a 426-residue protein sequence, read N- to C-terminus: MVVALGLDFGTSGARAIACDFDSDRSVSVSVTFPKTSQNWPQVWREALWQLLTQIPADWRSRIERIAIDGTSGTVLLCDREGQPQTEPLLYNQACPIDLADLADWVPADHAALSSTSSLAKLWFWQQQFGALPPDWQILAQADWLSLQLHGCSQQSDYHNALKLGYSPDRERFSKNLLDSELGALLPVVHEPGVAIGPILPAIAQEFGLSPDCQICAGTTDSIAAFLASGAHQPGEAVTSLGSTIVLKLLSQVAVSDRLTGVYSHKLGGYWLTGGASNCGGATLRQFFPDTELESLSCQIDPTKKSGLDYYPLPSRGERFPIADPDRLPQLEPRPENPVQFLQGLLEGLTQVETLGYQRLQDLGATPLKRIWTAGGGAKNAVWQQLRQQAIGVPIAIAPNTEAAFGTARLAAFGLAAFHSAGLKRT.

Residues Asp8, 12–15 (SGAR), Ser72, and Asp221 each bind substrate. Residues Ser243, Gly281, and 376–380 (GGAKN) contribute to the ATP site.

Belongs to the FGGY kinase family. Requires a divalent metal cation as cofactor.

The catalysed reaction is D-ribulose + ATP = D-ribulose 5-phosphate + ADP + H(+). Exhibits ATP hydrolysis without substrate. Phosphorylates D-ribulose. The protein is D-ribulose kinase of Synechococcus elongatus (strain ATCC 33912 / PCC 7942 / FACHB-805) (Anacystis nidulans R2).